Consider the following 660-residue polypeptide: Bifunctional polymyxin resistance protein ArnA (660 aa).

Positions 1-304 (MKAVIFAYHD…TLGLVAGARL (304 aa)) are formyltransferase ArnAFT. Residue His-104 is the Proton donor; for formyltransferase activity of the active site. (6R)-10-formyltetrahydrofolate is bound by residues Arg-114 and 136–140 (VKRAD). Residues 314–660 (RRIRVLILGV…RSVDIAERAS (347 aa)) are dehydrogenase ArnADH. NAD(+)-binding positions include Asp-347 and 368-369 (DI). UDP-alpha-D-glucuronate is bound by residues Ala-393, Tyr-398, and 432 to 433 (TS). Glu-434 acts as the Proton acceptor; for decarboxylase activity in catalysis. Residues Arg-460, Asn-492, 526–535 (KLIDGGQQKR), and Tyr-613 contribute to the UDP-alpha-D-glucuronate site. The Proton donor; for decarboxylase activity role is filled by Arg-619.

This sequence in the N-terminal section; belongs to the Fmt family. UDP-L-Ara4N formyltransferase subfamily. It in the C-terminal section; belongs to the NAD(P)-dependent epimerase/dehydratase family. UDP-glucuronic acid decarboxylase subfamily. As to quaternary structure, homohexamer, formed by a dimer of trimers.

The enzyme catalyses UDP-alpha-D-glucuronate + NAD(+) = UDP-beta-L-threo-pentopyranos-4-ulose + CO2 + NADH. The catalysed reaction is UDP-4-amino-4-deoxy-beta-L-arabinose + (6R)-10-formyltetrahydrofolate = UDP-4-deoxy-4-formamido-beta-L-arabinose + (6S)-5,6,7,8-tetrahydrofolate + H(+). The protein operates within nucleotide-sugar biosynthesis; UDP-4-deoxy-4-formamido-beta-L-arabinose biosynthesis; UDP-4-deoxy-4-formamido-beta-L-arabinose from UDP-alpha-D-glucuronate: step 1/3. It functions in the pathway nucleotide-sugar biosynthesis; UDP-4-deoxy-4-formamido-beta-L-arabinose biosynthesis; UDP-4-deoxy-4-formamido-beta-L-arabinose from UDP-alpha-D-glucuronate: step 3/3. Its pathway is bacterial outer membrane biogenesis; lipopolysaccharide biosynthesis. Its function is as follows. Bifunctional enzyme that catalyzes the oxidative decarboxylation of UDP-glucuronic acid (UDP-GlcUA) to UDP-4-keto-arabinose (UDP-Ara4O) and the addition of a formyl group to UDP-4-amino-4-deoxy-L-arabinose (UDP-L-Ara4N) to form UDP-L-4-formamido-arabinose (UDP-L-Ara4FN). The modified arabinose is attached to lipid A and is required for resistance to polymyxin and cationic antimicrobial peptides. This Salmonella schwarzengrund (strain CVM19633) protein is Bifunctional polymyxin resistance protein ArnA.